We begin with the raw amino-acid sequence, 497 residues long: Sestrin homolog (497 aa).

Residues serine 185 and serine 190 each carry the phosphoserine modification. Over residues 226 to 241 (NANPDYDSQTAASSNG) the composition is skewed to polar residues. The disordered stretch occupies residues 226 to 255 (NANPDYDSQTAASSNGGAPPDSANAVADGP).

This sequence belongs to the sestrin family. As to quaternary structure, associates with the GATOR2 complex; the interaction is probably direct. Associates with the GATOR1 complex; the interaction is probably indirect and mediated by the GATOR2 complex. Highly expressed in muscle-enriched tissues (at protein level).

It is found in the nucleus. It localises to the cytoplasm. In terms of biological role, functions as a negative feedback regulator of mTOR function. The protein is Sestrin homolog of Drosophila melanogaster (Fruit fly).